Here is a 1385-residue protein sequence, read N- to C-terminus: PsbD mRNA maturation factor Nac2, chloroplastic (1385 aa).

The transit peptide at 1–45 (MGALPCPAHIEHHQGLSSFGTRRVLRQSVACGAHRSRRRSLWAGA) directs the protein to the chloroplast. Residues 132 to 152 (GPHGAASATGAGSHSSSAGAP) show a composition bias toward low complexity. Disordered regions lie at residues 132–157 (GPHG…PTPR), 263–282 (AVAA…RSSA), 304–360 (TSSR…AAGP), 387–502 (RQQP…GHGQ), 546–568 (NGAG…SGTS), 726–756 (HADS…VAAA), and 840–899 (ARRA…APSA). Basic and acidic residues predominate over residues 271–281 (QPHEHQQERSS). Over residues 304–313 (TSSRRGGRSS) the composition is skewed to low complexity. A compositionally biased stretch (gly residues) spans 403–412 (NGSGKSGSGG). Composition is skewed to low complexity over residues 448 to 464 (APAA…RPAA), 554 to 568 (ASAS…SGTS), 729 to 744 (SSSS…SSSG), and 854 to 893 (ASTT…AAAG). 9 TPR repeats span residues 851 to 884 (RRGA…DPAS), 951 to 984 (GAVM…CPAD), 985 to 1018 (VALY…DRTD), 1019 to 1052 (KQLF…HPLN), 1053 to 1086 (TKII…DPLS), 1091 to 1124 (VHNR…HPNS), 1125 to 1158 (AALL…AGAF), 1160 to 1193 (AAVM…KQLN), and 1205 to 1238 (AWRA…APAV). 2 disordered regions span residues 1237 to 1257 (AVRG…GRRP) and 1333 to 1385 (IQDP…ADDM). A compositionally biased stretch (acidic residues) spans 1356-1365 (QDADYYEEPE). The segment covering 1374-1385 (AVRRPMPDADDM) has biased composition (basic and acidic residues).

In terms of assembly, part of 2 complexes of about 600 and less than 2000 kDa, both of which also contain non-polysomal RNA.

The protein resides in the plastid. It is found in the chloroplast stroma. Its function is as follows. Involved, directly or indirectly, in the processing of the chloroplast encoded psbD mRNA to its mature form, acting via the 5'-UTR of the psbD mRNA. The last 588 amino acids of the protein are sufficient to confer stability on the transcript in vivo. The chain is PsbD mRNA maturation factor Nac2, chloroplastic (NAC2) from Chlamydomonas reinhardtii (Chlamydomonas smithii).